The chain runs to 163 residues: Transcription elongation factor GreB (163 aa).

The protein belongs to the GreA/GreB family. GreB subfamily.

Necessary for efficient RNA polymerase transcription elongation past template-encoded arresting sites. The arresting sites in DNA have the property of trapping a certain fraction of elongating RNA polymerases that pass through, resulting in locked ternary complexes. Cleavage of the nascent transcript by cleavage factors such as GreA or GreB allows the resumption of elongation from the new 3'terminus. GreB releases sequences of up to 9 nucleotides in length. This chain is Transcription elongation factor GreB, found in Vibrio parahaemolyticus serotype O3:K6 (strain RIMD 2210633).